A 679-amino-acid chain; its full sequence is WD repeat-containing protein 48 homolog (679 aa).

WD repeat units follow at residues 26 to 65 (QHRN…NEKY), 71 to 110 (HHND…CMST), 113 to 152 (THRD…ALTA), 164 to 203 (GSKD…RSMK), 206 to 245 (GHTE…CIQT), 248 to 287 (VHKE…NKML), 290 to 329 (EEKA…RCVL), and 349 to 388 (KGGA…KKEE). The segment at 594 to 615 (PSAGNANNSLQNSQSDANSEGS) is disordered.

This sequence belongs to the WD repeat WDR48 family. Catalytic component of the Usp12-46 deubiquitylase complex consisting of Usp12-46, Wdr20 and Uaf1; regulatory subunit that, together wtih Wdr20, stabilizes Usp12-46. The Usp12-46 deubiquitylase complex associates with arr/arrow; the interaction leads to deubiquitination and stabilization of arr/arrow.

Regulatory component of the Usp12-46 deubiquitylase complex. activates deubiquitination by increasing the catalytic turnover without increasing the affinity of deubiquitinating enzymes for the substrate. The complex deubiquitylates the wg/wingless-signaling receptor arr/arrow, which stabilizes the receptor and increases its concentration at the cell surface; this enhances the sensitivity of cells to wg/wingless-signal stimulation. This increases the amplitude and spatial range of the signaling response to the wg/wingless morphogen gradient, facilitating the precise concentration-dependent regulation of its target genes. Together with Wdr20 and Usp12-46 required for wg/wingless-mediated signaling in the wing imaginal disc and for wg/wingless-dependent regulation of intestinal stem cell proliferation. The protein is WD repeat-containing protein 48 homolog of Drosophila mojavensis (Fruit fly).